A 236-amino-acid chain; its full sequence is 2-C-methyl-D-erythritol 4-phosphate cytidylyltransferase (236 aa).

The protein belongs to the IspD/TarI cytidylyltransferase family. IspD subfamily.

The catalysed reaction is 2-C-methyl-D-erythritol 4-phosphate + CTP + H(+) = 4-CDP-2-C-methyl-D-erythritol + diphosphate. It functions in the pathway isoprenoid biosynthesis; isopentenyl diphosphate biosynthesis via DXP pathway; isopentenyl diphosphate from 1-deoxy-D-xylulose 5-phosphate: step 2/6. Functionally, catalyzes the formation of 4-diphosphocytidyl-2-C-methyl-D-erythritol from CTP and 2-C-methyl-D-erythritol 4-phosphate (MEP). The protein is 2-C-methyl-D-erythritol 4-phosphate cytidylyltransferase of Paraburkholderia phymatum (strain DSM 17167 / CIP 108236 / LMG 21445 / STM815) (Burkholderia phymatum).